The chain runs to 277 residues: MPNITNNHTFNIVQLSDLHLTGDIGQAPSYQRFLAVFQTAKHLNPDLWLLTGDLVNDGNSDAYDWLFNQLQATKIPYLAVAGNHDVTHEIGIHLAHQERIHVPILPDRRLKNCFRYTFQAGHDWQILLLNSSVSGEIFGLLTHETLLWLDQTLTTHFEQTIIALHHHPTKVSSDWIDAHLLKNHQDFWHVIKKHAHVHTILCGHVHQVHTLHPLPAHQVQLLSCPSTDRQFMPFVDNFQIADTPAGCRMIQIDNKGIVSSYIQIVQNTHSFCLNNAN.

Asp17, His19, Asp53, Asn83, His165, His204, and His206 together coordinate Fe cation. Residues His19, Asp53, and 83-84 (NH) contribute to the AMP site. His206 is an AMP binding site.

Belongs to the cyclic nucleotide phosphodiesterase class-III family. It depends on Fe(2+) as a cofactor.

The protein is Probable cyclic nucleotide phosphodiesterase MCR_0369 of Moraxella catarrhalis (strain BBH18).